The chain runs to 300 residues: D-alanine--D-alanine ligase (300 aa).

The ATP-grasp domain occupies 99 to 293; that stretch reads KKILKYANIN…FAELLNSIVK (195 aa). ATP is bound at residue 126-181; sequence IEKIGYPVFVKPNSGGSSVATNLVKNKEGIKEAVELALKYDKEVMIENYTKGEEIT. Mg(2+) is bound by residues D248, E260, and N262.

The protein belongs to the D-alanine--D-alanine ligase family. Mg(2+) is required as a cofactor. Mn(2+) serves as cofactor.

It is found in the cytoplasm. The catalysed reaction is 2 D-alanine + ATP = D-alanyl-D-alanine + ADP + phosphate + H(+). Its pathway is cell wall biogenesis; peptidoglycan biosynthesis. Cell wall formation. In Clostridium botulinum (strain Loch Maree / Type A3), this protein is D-alanine--D-alanine ligase.